Consider the following 625-residue polypeptide: Probable receptor-like protein kinase At1g11050 (625 aa).

The signal sequence occupies residues 1–20 (MPNSILFLLLSFLYLTNCVA). The Extracellular segment spans residues 21–227 (QSPSQTCPLD…PLNSKKKRHT (207 aa)). N-linked (GlcNAc...) asparagine glycans are attached at residues Asn-40, Asn-106, Asn-121, and Asn-177. Residues 228–248 (VALALGITGAIFGALVIAGLI) traverse the membrane as a helical segment. At 249-625 (CLYFRFGKAV…LQIHSGDMLR (377 aa)) the chain is on the cytoplasmic side. One can recognise a Protein kinase domain in the interval 295–555 (FSQKNFIGRG…NPKGIMERFL (261 aa)). Residues 301–309 (IGRGGFGFV) and Lys-323 each bind ATP. Asp-426 serves as the catalytic Proton acceptor.

The protein belongs to the protein kinase superfamily. Ser/Thr protein kinase family.

The protein resides in the membrane. It catalyses the reaction L-seryl-[protein] + ATP = O-phospho-L-seryl-[protein] + ADP + H(+). The catalysed reaction is L-threonyl-[protein] + ATP = O-phospho-L-threonyl-[protein] + ADP + H(+). The chain is Probable receptor-like protein kinase At1g11050 from Arabidopsis thaliana (Mouse-ear cress).